The chain runs to 191 residues: Molybdenum cofactor guanylyltransferase (191 aa).

GTP-binding positions include 13–15 (LAG), K26, D72, and D102. D102 lines the Mg(2+) pocket.

This sequence belongs to the MobA family. In terms of assembly, monomer. Mg(2+) is required as a cofactor.

It localises to the cytoplasm. The enzyme catalyses Mo-molybdopterin + GTP + H(+) = Mo-molybdopterin guanine dinucleotide + diphosphate. Transfers a GMP moiety from GTP to Mo-molybdopterin (Mo-MPT) cofactor (Moco or molybdenum cofactor) to form Mo-molybdopterin guanine dinucleotide (Mo-MGD) cofactor. The protein is Molybdenum cofactor guanylyltransferase of Pseudomonas putida (strain ATCC 47054 / DSM 6125 / CFBP 8728 / NCIMB 11950 / KT2440).